The chain runs to 569 residues: MKQSQLLIPTLKEVPNDAEALSHQMMLRAGYIRQVTAGMYAYLPLAFRVLTNIETIIREEMEKINAVEMLMPAVLPASLWQESGRYETYGPNLFKFKNRHDSDFILAPTHEETFTMLVRDAIKSYKRLPLVMYQIQPKYRDEDRPRYGLLRGREFIMKDAYSFSLSDEDLDRIYNQMEQAYENIFDRIGLNYRAIVGDGGAMGGKDSKEFSAIAPVGEDTIVYSDSSDYAANLEMAKSLFVSKKSHAQLADLEKIATPGVHSIAELAEFLDVKPAALVKSMLYIADDQPVMVLVRGDHEVNETKLKNYLNADFLNPATPEDAQKYLGANFGSLGPVGVSEDVKILADQYVGDMVNVAVGADEDEHHYLNANLDRDFRVDAFADLREVQPGDLSPDGSGVLKFTKGIEIGHIFKLGTRYSDALGATVLDEGGRQKPVVMGSYGIGVSRLLSAIAEQQADDKGLVWPRNIAPFDIHLVPVNLKKDDQAQLTSELEEQLTAKGYRILTDDRKERPGVKFADSDLMGIPVRITIGKKAGEGIVEIKIRKTGETVEVIKDEVASTVEILFKDID.

It belongs to the class-II aminoacyl-tRNA synthetase family. ProS type 1 subfamily. Homodimer.

The protein localises to the cytoplasm. The enzyme catalyses tRNA(Pro) + L-proline + ATP = L-prolyl-tRNA(Pro) + AMP + diphosphate. In terms of biological role, catalyzes the attachment of proline to tRNA(Pro) in a two-step reaction: proline is first activated by ATP to form Pro-AMP and then transferred to the acceptor end of tRNA(Pro). As ProRS can inadvertently accommodate and process non-cognate amino acids such as alanine and cysteine, to avoid such errors it has two additional distinct editing activities against alanine. One activity is designated as 'pretransfer' editing and involves the tRNA(Pro)-independent hydrolysis of activated Ala-AMP. The other activity is designated 'posttransfer' editing and involves deacylation of mischarged Ala-tRNA(Pro). The misacylated Cys-tRNA(Pro) is not edited by ProRS. In Levilactobacillus brevis (strain ATCC 367 / BCRC 12310 / CIP 105137 / JCM 1170 / LMG 11437 / NCIMB 947 / NCTC 947) (Lactobacillus brevis), this protein is Proline--tRNA ligase.